A 331-amino-acid polypeptide reads, in one-letter code: Adenosine deaminase (331 aa).

The Zn(2+) site is built by His12 and His14. 3 residues coordinate substrate: His14, Asp16, and Gly170. His197 provides a ligand contact to Zn(2+). Glu200 acts as the Proton donor in catalysis. Residue Asp278 coordinates Zn(2+).

The protein belongs to the metallo-dependent hydrolases superfamily. Adenosine and AMP deaminases family. Adenosine deaminase subfamily. It depends on Zn(2+) as a cofactor.

The enzyme catalyses adenosine + H2O + H(+) = inosine + NH4(+). It carries out the reaction 2'-deoxyadenosine + H2O + H(+) = 2'-deoxyinosine + NH4(+). Its function is as follows. Catalyzes the hydrolytic deamination of adenosine and 2-deoxyadenosine. This is Adenosine deaminase from Shewanella woodyi (strain ATCC 51908 / MS32).